The primary structure comprises 158 residues: S-ribosylhomocysteine lyase (158 aa).

3 residues coordinate Fe cation: histidine 56, histidine 60, and cysteine 125.

This sequence belongs to the LuxS family. As to quaternary structure, homodimer. Fe cation is required as a cofactor.

The enzyme catalyses S-(5-deoxy-D-ribos-5-yl)-L-homocysteine = (S)-4,5-dihydroxypentane-2,3-dione + L-homocysteine. In terms of biological role, involved in the synthesis of autoinducer 2 (AI-2) which is secreted by bacteria and is used to communicate both the cell density and the metabolic potential of the environment. The regulation of gene expression in response to changes in cell density is called quorum sensing. Catalyzes the transformation of S-ribosylhomocysteine (RHC) to homocysteine (HC) and 4,5-dihydroxy-2,3-pentadione (DPD). This is S-ribosylhomocysteine lyase from Leuconostoc citreum (strain KM20).